The chain runs to 419 residues: L-rhamnose isomerase (419 aa).

The Mn(2+) site is built by histidine 262, aspartate 294, and aspartate 296.

The protein belongs to the rhamnose isomerase family. In terms of assembly, homotetramer. The cofactor is Mn(2+).

The protein localises to the cytoplasm. It carries out the reaction L-rhamnopyranose = L-rhamnulose. The protein operates within carbohydrate degradation; L-rhamnose degradation; glycerone phosphate from L-rhamnose: step 1/3. Its function is as follows. Catalyzes the interconversion of L-rhamnose and L-rhamnulose. This chain is L-rhamnose isomerase, found in Salmonella paratyphi A (strain AKU_12601).